Here is a 24-residue protein sequence, read N- to C-terminus: Humanin (24 aa).

Residues 1–12 form a sufficient to interact with BID and BIM and to suppress BID and BIM activity region; it reads MAPRGFSCLLLL. The segment at 3-19 is sufficient for neuroprotective activity; that stretch reads PRGFSCLLLLTSEIDLP. The segment at 5 to 12 is sufficient to interact with MPP8; the sequence is GFSCLLLL. 2 required for secretion regions span residues 9-11 and 19-20; these read LLL and PV.

As to quaternary structure, homodimer. Interacts with amyloid-beta protein 42 (Abeta42); the interaction prevents Abeta42 fibril formation. Interacts with BAX; forms fibers with BAX which results in BAX conformational changes and sequestering of BAX into the fibers, preventing BAX activation. Interacts with both full-length BID and cleaved BID p15; forms fibers with BID which results in BID conformational changes and sequestering of BID into the fibers, preventing BID activation. Interacts with BIM isoform BimEL but not with BIM isoforms BimL or BimS; the interaction prevents BIM-induced apoptosis. Interacts with IGFBP3; competes with importin KPNB1 for binding to IGFBP3, blocking IGFBP3 nuclear import. Interacts with TRIM11. Interacts with MPP8. Expressed in testis, seminal plasma and sperm (at protein level). Higher seminal plasma levels are associated with normospermia than with oligospermia, asthenospermia or oligoasthenospermia (at protein level). Higher sperm levels are associated with normospermia than with asthenospermia (at protein level). Expressed in retinal epithelial cells (at protein level). Expressed in the heart, skeletal muscle, kidney and liver. Lesser but significant expression is observed in the brain and the gastrointestinal tract. Expressed in the AD brain, where it is found in some of the large intact neurons of the occipital lobes and small and round reactive glial cells in the hippocampus.

The protein localises to the secreted. Its subcellular location is the cytoplasm. It localises to the cell projection. It is found in the cilium. The protein resides in the flagellum. The protein localises to the nucleus. Its subcellular location is the mitochondrion. Functionally, plays a role as a neuroprotective factor. Protects against neuronal cell death induced by multiple different familial Alzheimer disease genes and amyloid-beta proteins in Alzheimer disease. Mediates its neuroprotective effect by interacting with a receptor complex composed of IL6ST/GP130, IL27RA/WSX1 and CNTFR. Also acts as a ligand for G-protein coupled receptors FPR2/FPRL1 and FPR3/FPRL2. Inhibits amyloid-beta protein 40 fibril formation. Also inhibits amyloid-beta protein 42 fibril formation. Suppresses apoptosis by binding to BAX and preventing the translocation of BAX from the cytosol to mitochondria. Also suppresses apoptosis by binding to BID and inhibiting the interaction of BID with BAX and BAK which prevents oligomerization of BAX and BAK and suppresses release of apoptogenic proteins from mitochondria. Forms fibers with BAX and also with BID, inducing BAX and BID conformational changes and sequestering them into the fibers which prevents their activation. Can also suppress apoptosis by interacting with BIM isoform BimEL, inhibiting BimEL-induced activation of BAX, blocking oligomerization of BAX and BAK, and preventing release of apoptogenic proteins from mitochondria. Plays a role in up-regulation of anti-apoptotic protein BIRC6/APOLLON, leading to inhibition of neuronal cell death. Binds to IGFBP3 and specifically blocks IGFBP3-induced cell death. Competes with importin KPNB1 for binding to IGFBP3 which is likely to block IGFBP3 nuclear import. Induces chemotaxis of mononuclear phagocytes via FPR2/FPRL1. Reduces aggregation and fibrillary formation by suppressing the effect of APP on mononuclear phagocytes and acts by competitively inhibiting the access of FPR2 to APP. Protects retinal pigment epithelium (RPE) cells against oxidative stress-induced and endoplasmic reticulum (ER) stress-induced apoptosis. Promotes mitochondrial biogenesis in RPE cells following oxidative stress and promotes STAT3 phosphorylation which leads to inhibition of CASP3 release. Also reduces CASP4 levels in RPE cells, suppresses ER stress-induced mitochondrial superoxide production and plays a role in up-regulation of mitochondrial glutathione. Reduces testicular hormone deprivation-induced apoptosis of germ cells at the nonandrogen-sensitive stages of the seminiferous epithelium cycle. Protects endothelial cells against free fatty acid-induced inflammation by suppressing oxidative stress, reducing expression of TXNIP and inhibiting activation of the NLRP3 inflammasome which inhibits expression of pro-inflammatory cytokines IL1B and IL18. Protects against high glucose-induced endothelial cell dysfunction by mediating activation of ERK5 which leads to increased expression of transcription factor KLF2 and prevents monocyte adhesion to endothelial cells. Inhibits the inflammatory response in astrocytes. Increases the expression of PPARGC1A/PGC1A in pancreatic beta cells which promotes mitochondrial biogenesis. Increases insulin sensitivity. This is Humanin from Homo sapiens (Human).